Reading from the N-terminus, the 258-residue chain is MGKYNFTALRVRQTALRQHAAGKIRAPPKWLDVVADIPPAQVLVRNQAPQHQLVRQRVKTLPGTSKPQVVFEVQEKRIKPKKASRMFLPTEIKYEEDQLRQEFFRDHPWELARPRVLVESTGKDSEHYDWSRLQQPGKRLDGESVVQRQLWLLNNVPDMTKSAAYDIARREFYRLRLQEDIERRVAAEEAEATGATFGPSLLEVGMELENQEYERWKAWAKMEAQLLDQKTAAFTGAPEIAAADDAVEELEEKVPVPV.

This sequence belongs to the mitochondrion-specific ribosomal protein mS23 family. Component of the mitochondrial small ribosomal subunit.

The protein resides in the mitochondrion. This Aspergillus fumigatus (strain CBS 144.89 / FGSC A1163 / CEA10) (Neosartorya fumigata) protein is Small ribosomal subunit protein mS23.